Here is a 1069-residue protein sequence, read N- to C-terminus: MATQVMGQSSGGGSLFNNSGNMGMALPNDMYDLHDLSKAELAAPQLIMLANVALTGEVNGSCCDYLVGEERQMAELMPVGDNHFSDSEGEGLEESAELKGDPSGLDNMELRSLELSVVEPQPVFEASAAPEVYSSNKDPAPEAPVAEDKCKNLKAKPFRCKPCQYEAESEEQFVHHIRVHSAKKFFVEESAEKQAKARESGASPSEEGEFSKGPIRCDRCGYNTNRYDHYTAHLKHHLRAGDNERVYKCIICTYTTVSEYHWRKHLRNHFPRKVYTCSKCNYFSTEKNNYVQHVRTHTGERPYKCELCPYSSSQKTHLTRHMRTHSGEKPFKCDQCNYVASNQHEVTRHARQVHNGPKPLNCPHCDYKTADRSNFKKHVELHVNPRQFNCPVCDYAASKKCNLQYHFKSKHPTCPSKTMDVSKVKLKKTKRREADLHRDAAAAATEQTDTEQAKTKGVDASARRSERPVKGVGKDVPKEKKPCSNASVVQVTTRTRKSAVETKAAEGKHTDGQTGNNAEKSSKAKKSKRKMDAEAHPSVEPVTEGPVTKKKKTESKPKTSGEVPKGSRVEDRKADKQQSASIKKGGKKTALKTKTAKKGSKLAPKWVGHTEPSSEMAQGGESPVPALTQAVVTPSGSTQTELSSPMDIAQTEPAQMDVSQTGPPQVQRPLPVEPAQLEPSPPQEPPQVEPPACVEPPPPVEPPCPMEPAEMEPSPPMEPSQVEPPPHLEPPLPMELPQVELPPVEDCQKELPPVEHAQTKVAQTGPTQVGAVQEEPLFCLRATSSQANQKVISPKDRAKEKLSVLSEMARQEQVLIEVGLVPVRDSQLLKASKSAPDLPAPPSPLPKGHLRREETPKDQEMFSDGEGNKVSPLEKGGTEEAGESRAELAAPMESTSALSSEQSSNAPDGETLHSECQADSTAVCEMEVDTEQKTDRVPLKDSAVEPVSPLNPRVDPEAAAPAVVASPPITLAESQEIDEDEGIHSHDGSDLSDNMSEGSDDSGLHGARPAPQEATSKSGKEGLAVKVTEGEFVCIFCDRSFRKEKDYSKHLNRHLVNVYFLEEAAEEQE.

The segment at 32–121 is interaction with SIN3A; that stretch reads DLHDLSKAEL…SLELSVVEPQ (90 aa). The tract at residues 43-57 is interaction with SIN3B; sequence APQLIMLANVALTGE. The interval 85-104 is disordered; that stretch reads SDSEGEGLEESAELKGDPSG. The segment at 144–417 is interaction with ZFP90; it reads PVAEDKCKNL…KSKHPTCPSK (274 aa). The C2H2-type 1 zinc finger occupies 158 to 180; that stretch reads FRCKPCQYEAESEEQFVHHIRVH. The interval 200–211 is required for binding to the neuron-restrictive silencer element; that stretch reads SGASPSEEGEFS. 7 C2H2-type zinc fingers span residues 215–237, 247–269, 275–297, 303–325, 331–354, 360–382, and 388–411; these read IRCD…LKHH, YKCI…LRNH, YTCS…VRTH, YKCE…MRTH, FKCD…RQVH, LNCP…VELH, and FNCP…KSKH. Disordered stretches follow at residues 425–737 and 830–1022; these read KLKK…MELP and KASK…GKEG. Residues 451-482 are compositionally biased toward basic and acidic residues; sequence EQAKTKGVDASARRSERPVKGVGKDVPKEKKP. A compositionally biased stretch (polar residues) spans 484-493; the sequence is SNASVVQVTT. 2 stretches are compositionally biased toward basic and acidic residues: residues 498-511 and 554-576; these read SAVE…KHTD and ESKP…KADK. Positions 584–600 are enriched in basic residues; sequence KGGKKTALKTKTAKKGS. Residues 630–643 show a composition bias toward polar residues; that stretch reads AVVTPSGSTQTELS. 2 stretches are compositionally biased toward pro residues: residues 679–706 and 713–734; these read PSPP…PCPM and PSPP…PLPM. 2 stretches are compositionally biased toward basic and acidic residues: residues 851 to 860 and 876 to 886; these read RREETPKDQE and GGTEEAGESRA. Low complexity predominate over residues 894–904; it reads STSALSSEQSS. The span at 930–943 shows a compositional bias: basic and acidic residues; that stretch reads TEQKTDRVPLKDSA. Position 948 is a phosphoserine (S948). The span at 957–968 shows a compositional bias: low complexity; it reads EAAAPAVVASPP. The interval 981–1059 is interaction with RCOR1; that stretch reads EGIHSHDGSD…HLNRHLVNVY (79 aa). The segment at 1032–1054 adopts a C2H2-type 9 zinc-finger fold; the sequence is FVCIFCDRSFRKEKDYSKHLNRH.

In terms of assembly, isoform 1 and isoform 6 form heterodimers. Isoform 6: Forms homodimers and homooligomers; binds to the neuron-restrictive silencer element (NRSE) as monomer. Interacts with SIN3A, SIN3B and RCOR1. Interacts with CDYL. Interacts with EHMT1 and EHMT2 only in the presence of CDYL. Part of a complex containing at least CDYL, REST, WIZ, SETB1, EHMT1 and EHMT2. Interacts (via zinc-finger DNA-binding domain) with ZFP90 (via N- and C-termini); the interaction inhibits REST repressor activity. Interacts (via C2H2-type zinc finger 5) with PRICKLE1. Interacts with FBXW11 and BTRC. Interacts with USP7. In terms of processing, O-glycosylated. Phosphorylated; phosphorylation is required for ubiquitination. Post-translationally, ubiquitinated; ubiquitination is mediated by BTRC and leads to proteasomal degradation in G2 phase. Ubiquitination increases during neuronal differentiation. Deubiquitinated by USP7; leading to its stabilization and promoting the maintenance of neural progenitor cells. As to expression, expressed in the hippocampus including the granule cell layer of the dentate gyrus, the pyramidal cell layers of CA1 and CA3, the apical and basilar dendrite layers of the stratum radiatum and stratum oriens of CA1, the stratum lucidum and stratum oriens of CA3 and in astroglia (at protein level). Expressed in the brain, with the highest levels in the neurons of hippocampus, pons/medulla and midbrain.

Its subcellular location is the nucleus. The protein localises to the cytoplasm. In terms of biological role, transcriptional repressor which binds neuron-restrictive silencer element (NRSE) and represses neuronal gene transcription in non-neuronal cells. Restricts the expression of neuronal genes by associating with two distinct corepressors, SIN3A and RCOR1, which in turn recruit histone deacetylase to the promoters of REST-regulated genes. Mediates repression by recruiting the BHC complex at RE1/NRSE sites which acts by deacetylating and demethylating specific sites on histones, thereby acting as a chromatin modifier. Transcriptional repression by REST-CDYL via the recruitment of histone methyltransferase EHMT2 may be important in transformation suppression. Represses the expression of SRRM4 in non-neural cells to prevent the activation of neural-specific splicing events and to prevent production of REST isoform 6. Repressor activity may be inhibited by forming heterodimers with isoform 6, thereby preventing binding to NRSE or binding to corepressors and leading to derepression of target genes. Also maintains repression of neuronal genes in neural stem cells, and allows transcription and differentiation into neurons by dissociation from RE1/NRSE sites of target genes. Thereby is involved in maintaining the quiescent state of adult hippocampal neural stem cells and preventing premature differentiation into mature neurons. Plays a role in the developmental switch in synaptic NMDA receptor composition during postnatal development, by repressing GRIN2B expression and thereby altering NMDA receptor properties from containing primarily GRIN2B to primarily GRIN2A subunits. Acts as a regulator of osteoblast differentiation. Key repressor of gene expression in hypoxia; represses genes in hypoxia by direct binding to an RE1/NRSE site on their promoter regions. May also function in stress resistance in the brain during aging; possibly by regulating expression of genes involved in cell death and in the stress response. Repressor of gene expression in the hippocampus after ischemia by directly binding to RE1/NRSE sites and recruiting SIN3A and RCOR1 to promoters of target genes, thereby promoting changes in chromatin modifications and ischemia-induced cell death. After ischemia, might play a role in repression of miR-132 expression in hippocampal neurons, thereby leading to neuronal cell death. Binds to the 3' region of the neuron-restrictive silencer element (NRSE), with lower affinity than full-length REST isoform 1. Exhibits weaker repressor activity compared to isoform 1. May negatively regulate the repressor activity of isoform 1 by binding to isoform 1, thereby preventing its binding to NRSE and leading to derepression of target genes. However, in another study, does not appear to be implicated in repressor activity of a NRSE motif-containing reporter construct nor in inhibitory activity on the isoform 1 transcriptional repressor activity. Post-transcriptional inactivation of REST by SRRM4-dependent alternative splicing into isoform 6 is required in mechanosensory hair cells in the inner ear for derepression of neuronal genes and hearing. The polypeptide is RE1-silencing transcription factor (Rest) (Rattus norvegicus (Rat)).